Reading from the N-terminus, the 259-residue chain is Triosephosphate isomerase (259 aa).

Position 10–12 (10–12 (NWK)) interacts with substrate. Catalysis depends on histidine 100, which acts as the Electrophile. Glutamate 172 acts as the Proton acceptor in catalysis. Residues glycine 178, serine 218, and 239–240 (GG) each bind substrate.

The protein belongs to the triosephosphate isomerase family. As to quaternary structure, homodimer.

The protein localises to the cytoplasm. The enzyme catalyses D-glyceraldehyde 3-phosphate = dihydroxyacetone phosphate. It functions in the pathway carbohydrate biosynthesis; gluconeogenesis. Its pathway is carbohydrate degradation; glycolysis; D-glyceraldehyde 3-phosphate from glycerone phosphate: step 1/1. Involved in the gluconeogenesis. Catalyzes stereospecifically the conversion of dihydroxyacetone phosphate (DHAP) to D-glyceraldehyde-3-phosphate (G3P). The chain is Triosephosphate isomerase from Corynebacterium glutamicum (strain ATCC 13032 / DSM 20300 / JCM 1318 / BCRC 11384 / CCUG 27702 / LMG 3730 / NBRC 12168 / NCIMB 10025 / NRRL B-2784 / 534).